Reading from the N-terminus, the 475-residue chain is D(1B) dopamine receptor (475 aa).

At 1 to 38 (MLPPGRNRTAQPARLGLQRQLAQVDAPAGSATPLGPAQ) the chain is on the extracellular side. N-linked (GlcNAc...) asparagine glycosylation is present at asparagine 7. A helical membrane pass occupies residues 39-64 (VVTAGLLTLLIVWTLLGNVLVCAAIV). Over 65 to 75 (RSRHLRAKMTN) the chain is Cytoplasmic. Residues 76–102 (IFIVSLAVSDLFVALLVMPWKAVAEVA) traverse the membrane as a helical segment. The Extracellular portion of the chain corresponds to 103-111 (GYWPFGTFC). The cysteines at positions 111 and 211 are disulfide-linked. A helical transmembrane segment spans residues 112-134 (DIWVAFDIMCSTASILNLCIISV). The Cytoplasmic portion of the chain corresponds to 135 to 153 (DRYWAISRPFRYERKMTQR). A helical transmembrane segment spans residues 154-179 (VALVMVGLAWTLSILISFIPVQLNWH). Residues 180 to 215 (RDKAGSQGQEGLLSNGTPWEEGWELEGRTENCDSSL) are Extracellular-facing. The chain crosses the membrane as a helical span at residues 216 to 240 (NRTYAISSSLISFYIPVAIMIVTYT). Topologically, residues 241 to 289 (RIYRIAQVQIRRISSLERAAEHAQSCRSRGAYEPDPSLRASIKKETKVF) are cytoplasmic. Residues 290-317 (KTLSMIMGVFVCCWLPFFILNCMVPFCS) form a helical membrane-spanning segment. The Extracellular portion of the chain corresponds to 318–335 (SGDAEGPKTGFPCVSETT). A helical membrane pass occupies residues 336–357 (FDIFVWFGWANSSLNPIIYAFN). At 358–475 (ADFRKVFAQL…LTPNCFDKTA (118 aa)) the chain is on the cytoplasmic side. Cysteine 370 carries S-palmitoyl cysteine lipidation. Residues 415 to 443 (SGDREVGEEEEEGPFDHMSQISPTTPDGD) are disordered.

It belongs to the G-protein coupled receptor 1 family. In terms of tissue distribution, brain, in the lateral mammillary nuclei, the anterior pretectal nuclei, and several layers of the hippocampus.

The protein localises to the cell membrane. Functionally, dopamine receptor whose activity is mediated by G proteins which activate adenylyl cyclase. This Rattus norvegicus (Rat) protein is D(1B) dopamine receptor (Drd5).